Reading from the N-terminus, the 169-residue chain is UPF0303 protein Oant_1766 (169 aa).

It belongs to the UPF0303 family.

The chain is UPF0303 protein Oant_1766 from Brucella anthropi (strain ATCC 49188 / DSM 6882 / CCUG 24695 / JCM 21032 / LMG 3331 / NBRC 15819 / NCTC 12168 / Alc 37) (Ochrobactrum anthropi).